Here is a 235-residue protein sequence, read N- to C-terminus: Lipoprotein-releasing system ATP-binding protein LolD (235 aa).

Residues 13–235 (LCCSNIIKRY…SNGMLKISTI (223 aa)) form the ABC transporter domain. Position 49–56 (49–56 (GASGSGKS)) interacts with ATP.

This sequence belongs to the ABC transporter superfamily. Lipoprotein translocase (TC 3.A.1.125) family. The complex is composed of two ATP-binding proteins (LolD) and two transmembrane proteins (LolC and LolE).

It is found in the cell inner membrane. Its function is as follows. Part of the ABC transporter complex LolCDE involved in the translocation of mature outer membrane-directed lipoproteins, from the inner membrane to the periplasmic chaperone, LolA. Responsible for the formation of the LolA-lipoprotein complex in an ATP-dependent manner. This is Lipoprotein-releasing system ATP-binding protein LolD from Blochmanniella floridana.